Consider the following 262-residue polypeptide: 2-oxo-tetronate isomerase (262 aa).

Glutamate 143 (proton donor/acceptor) is an active-site residue. The Mg(2+) site is built by glutamate 143, aspartate 178, glutamine 204, and glutamate 240. Glutamate 240 functions as the Proton donor/acceptor in the catalytic mechanism.

The protein belongs to the hyi family. OtnI subfamily.

The catalysed reaction is 2-dehydro-L-erythronate = 3-dehydro-L-erythronate. It catalyses the reaction 2-dehydro-D-erythronate = 3-dehydro-D-erythronate. Catalyzes the isomerization of 2-oxo-tetronate to 3-oxo-tetronate. The protein is 2-oxo-tetronate isomerase of Pectobacterium atrosepticum (strain SCRI 1043 / ATCC BAA-672) (Erwinia carotovora subsp. atroseptica).